The sequence spans 2869 residues: uncharacterized protein (2869 aa).

The span at methionine 1 to aspartate 10 shows a compositional bias: low complexity. Disordered regions lie at residues methionine 1–lysine 132, asparagine 171–arginine 349, phenylalanine 380–serine 485, lysine 498–lysine 517, asparagine 690–glutamine 812, isoleucine 860–asparagine 1074, isoleucine 1108–serine 1175, serine 1188–aspartate 1216, valine 1224–threonine 1243, glutamate 1340–isoleucine 1448, isoleucine 1476–tyrosine 1704, asparagine 1731–phenylalanine 1832, and aspartate 2725–glutamate 2773. The span at histidine 14–phenylalanine 25 shows a compositional bias: polar residues. 5 stretches are compositionally biased toward low complexity: residues glycine 26–asparagine 124, asparagine 171–tyrosine 348, asparagine 388–asparagine 414, tyrosine 421–lysine 446, and lysine 454–asparagine 478. Over residues histidine 505–lysine 514 the composition is skewed to basic and acidic residues. 2 stretches are compositionally biased toward low complexity: residues asparagine 690 to glutamine 707 and proline 714 to glutamine 749. Over residues tyrosine 750–glutamine 763 the composition is skewed to basic and acidic residues. The segment covering asparagine 764–glutamine 781 has biased composition (low complexity). Residues tyrosine 782–glutamine 795 show a composition bias toward basic and acidic residues. Composition is skewed to low complexity over residues asparagine 796–glutamine 812, isoleucine 860–asparagine 891, aspartate 898–aspartate 911, cysteine 921–asparagine 991, and asparagine 1000–asparagine 1074. Over residues serine 1188–isoleucine 1212 the composition is skewed to low complexity. A compositionally biased stretch (polar residues) spans threonine 1230–threonine 1243. Composition is skewed to low complexity over residues aspartate 1377–isoleucine 1448 and isoleucine 1476–aspartate 1639. The span at isoleucine 1640 to asparagine 1659 shows a compositional bias: acidic residues. 3 stretches are compositionally biased toward low complexity: residues valine 1660–tyrosine 1704, asparagine 1731–serine 1823, and serine 2739–serine 2754. Residues asparagine 2758–glutamate 2773 are compositionally biased toward acidic residues.

This is an uncharacterized protein from Dictyostelium discoideum (Social amoeba).